Here is a 299-residue protein sequence, read N- to C-terminus: Acarbose 7(IV)-phosphotransferase (299 aa).

The protein belongs to the carbohydrate kinase PfkB family.

The catalysed reaction is acarbose + ATP = acarbose 7(IV)-phosphate + ADP + H(+). Its function is as follows. Catalyzes the phosphorylation of the alpha-glucosidase inhibitor acarbose. Phosphorylation of acarbose could be a resistance-like self-protection mechanism. The polypeptide is Acarbose 7(IV)-phosphotransferase (Actinoplanes sp. (strain ATCC 31044 / CBS 674.73 / SE50/110)).